Consider the following 131-residue polypeptide: Large ribosomal subunit protein bL17 (131 aa).

It belongs to the bacterial ribosomal protein bL17 family. Part of the 50S ribosomal subunit. Contacts protein L32.

The sequence is that of Large ribosomal subunit protein bL17 from Thermotoga maritima (strain ATCC 43589 / DSM 3109 / JCM 10099 / NBRC 100826 / MSB8).